The following is a 950-amino-acid chain: Bifunctional glutamine synthetase adenylyltransferase/adenylyl-removing enzyme (950 aa).

The tract at residues 1 to 443 (MSLPSPLIPV…VFVTLIGDEE (443 aa)) is adenylyl removase. Residues 450–950 (ERHFNELWDM…WQEWLESSTI (501 aa)) are adenylyl transferase.

This sequence belongs to the GlnE family. Mg(2+) serves as cofactor.

It carries out the reaction [glutamine synthetase]-O(4)-(5'-adenylyl)-L-tyrosine + phosphate = [glutamine synthetase]-L-tyrosine + ADP. The catalysed reaction is [glutamine synthetase]-L-tyrosine + ATP = [glutamine synthetase]-O(4)-(5'-adenylyl)-L-tyrosine + diphosphate. Involved in the regulation of glutamine synthetase GlnA, a key enzyme in the process to assimilate ammonia. When cellular nitrogen levels are high, the C-terminal adenylyl transferase (AT) inactivates GlnA by covalent transfer of an adenylyl group from ATP to specific tyrosine residue of GlnA, thus reducing its activity. Conversely, when nitrogen levels are low, the N-terminal adenylyl removase (AR) activates GlnA by removing the adenylyl group by phosphorolysis, increasing its activity. The regulatory region of GlnE binds the signal transduction protein PII (GlnB) which indicates the nitrogen status of the cell. In Vibrio vulnificus (strain CMCP6), this protein is Bifunctional glutamine synthetase adenylyltransferase/adenylyl-removing enzyme.